A 574-amino-acid polypeptide reads, in one-letter code: Optineurin (574 aa).

A disordered region spans residues 1 to 33 (MSHQPLSCLTEKGDSPTETTGNGPPTLAHPNLD). Residues 38 to 170 (HELLQQMREL…VSELQLKLNS (133 aa)) are a coiled coil. The interval 58–209 (MKLNNQAMKG…GPIRTDSIDT (152 aa)) is interaction with Rab8. Residues 176 to 181 (DSFVEI) carry the LIR motif. S177 bears the Phosphoserine; by TBK1 mark. S198 carries the phosphoserine modification. Positions 233 to 496 (CLREGNQKVE…ALQLAVLLKD (264 aa)) form a coiled coil. The span at 262–286 (AKDRSETETQTEEHKEQEKEEEKSP) shows a compositional bias: basic and acidic residues. The disordered stretch occupies residues 262 to 292 (AKDRSETETQTEEHKEQEKEEEKSPETVGSE). S336 carries the phosphoserine modification. An interaction with HD region spans residues 405–574 (KRRESEKVDK…LLIHVTDCII (170 aa)). Positions 406–515 (RRESEKVDKV…RQSLMEMQSR (110 aa)) are interaction with MYO6. The UBAN motif lies at 468-473 (DFHAER). A Phosphoserine modification is found at S521. The CCHC NOA-type zinc finger occupies 544-574 (QQNIPIHSCPKCGEVLPDIDTLLIHVTDCII). Positions 552, 555, 568, and 572 each coordinate Zn(2+).

As to quaternary structure, self-associates. Interacts with HD. Interacts with GTF3A. Interacts with MYO6. Interacts (via UBAN) with ubiquitinated TFRC. Interacts with GTP-bound Rab8 (RAB8A and/or RAB8B). Interacts with TBC1D17. Interacts with TBK1. Interacts with TRAF3. Binds to linear ubiquitin chains. Interacts with LC3 family members MAP1LC3A, MAP1LC3B, GABARAP, GABARAPL1 and GABARAPL2; OPTN phosphorylation increases the association (at least with MAP1LC3B). Interacts with RAB12; the interaction may be indirect. Interacts with TBK1; this interaction leads to the Golgi localization of TBK1 and its subsequent activation. Interacts with palmitoyltransferase ZDHHC17/HIP14; the interaction does not lead to palmitoylation of OPTN. Interacts with CYLD. Interacts with TOM1; the interaction is indirect and is mediated by MYO6, which acts as a bridge between TOM1 and OPTN. Interacts with USP12; the interaction is independent of USP12 deubiquitinase activity and may be involved in regulation of autophagic flux. Phosphorylated by TBK1, leading to restrict bacterial proliferation in case of infection. Present in aqueous humor of the eye (at protein level). Expressed in trabecular meshwork and astrocytes.

It is found in the cytoplasm. It localises to the perinuclear region. Its subcellular location is the golgi apparatus. The protein localises to the trans-Golgi network. The protein resides in the cytoplasmic vesicle. It is found in the autophagosome. It localises to the recycling endosome. Plays an important role in the maintenance of the Golgi complex, in membrane trafficking, in exocytosis, through its interaction with myosin VI and Rab8. Links myosin VI to the Golgi complex and plays an important role in Golgi ribbon formation. Negatively regulates the induction of IFNB in response to RNA virus infection. Plays a neuroprotective role in the eye and optic nerve. Probably part of the TNF-alpha signaling pathway that can shift the equilibrium toward induction of cell death. May act by regulating membrane trafficking and cellular morphogenesis via a complex that contains Rab8 and huntingtin (HD). Mediates the interaction of Rab8 with the probable GTPase-activating protein TBC1D17 during Rab8-mediated endocytic trafficking, such as that of transferrin receptor (TFRC/TfR); regulates Rab8 recruitment to tubules emanating from the endocytic recycling compartment. Autophagy receptor that interacts directly with both the cargo to become degraded and an autophagy modifier of the MAP1 LC3 family; targets ubiquitin-coated bacteria (xenophagy) and appears to function in the same pathway as SQSTM1 and CALCOCO2/NDP52. The sequence is that of Optineurin (OPTN) from Sus scrofa (Pig).